The chain runs to 75 residues: DNA-directed RNA polymerase subunit omega (75 aa).

This sequence belongs to the RNA polymerase subunit omega family. As to quaternary structure, in cyanobacteria the RNAP catalytic core is composed of 2 alpha, 1 beta, 1 beta', 1 gamma and 1 omega subunit. When a sigma factor is associated with the core the holoenzyme is formed, which can initiate transcription.

It carries out the reaction RNA(n) + a ribonucleoside 5'-triphosphate = RNA(n+1) + diphosphate. Functionally, promotes RNA polymerase assembly. Latches the N- and C-terminal regions of the beta' subunit thereby facilitating its interaction with the beta and alpha subunits. This is DNA-directed RNA polymerase subunit omega from Parasynechococcus marenigrum (strain WH8102).